The following is a 435-amino-acid chain: Glutamate-1-semialdehyde 2,1-aminomutase (435 aa).

At K266 the chain carries N6-(pyridoxal phosphate)lysine.

It belongs to the class-III pyridoxal-phosphate-dependent aminotransferase family. HemL subfamily. In terms of assembly, homodimer. Pyridoxal 5'-phosphate serves as cofactor.

The protein localises to the cytoplasm. It carries out the reaction (S)-4-amino-5-oxopentanoate = 5-aminolevulinate. It functions in the pathway porphyrin-containing compound metabolism; protoporphyrin-IX biosynthesis; 5-aminolevulinate from L-glutamyl-tRNA(Glu): step 2/2. This Coxiella burnetii (strain CbuK_Q154) (Coxiella burnetii (strain Q154)) protein is Glutamate-1-semialdehyde 2,1-aminomutase.